A 505-amino-acid chain; its full sequence is Glycerol kinase (505 aa).

Thr13 provides a ligand contact to ADP. Residues Thr13, Thr14, and Ser15 each contribute to the ATP site. Position 13 (Thr13) interacts with sn-glycerol 3-phosphate. ADP is bound at residue Arg17. Sn-glycerol 3-phosphate is bound by residues Arg83, Glu84, Tyr135, and Asp247. 5 residues coordinate glycerol: Arg83, Glu84, Tyr135, Asp247, and Gln248. Residues Thr269 and Gly313 each coordinate ADP. ATP is bound by residues Thr269, Gly313, Gln317, and Gly414. 2 residues coordinate ADP: Gly414 and Asn418.

The protein belongs to the FGGY kinase family.

The enzyme catalyses glycerol + ATP = sn-glycerol 3-phosphate + ADP + H(+). It functions in the pathway polyol metabolism; glycerol degradation via glycerol kinase pathway; sn-glycerol 3-phosphate from glycerol: step 1/1. Its activity is regulated as follows. Inhibited by fructose 1,6-bisphosphate (FBP). Functionally, key enzyme in the regulation of glycerol uptake and metabolism. Catalyzes the phosphorylation of glycerol to yield sn-glycerol 3-phosphate. In Clavibacter michiganensis subsp. michiganensis (strain NCPPB 382), this protein is Glycerol kinase.